The sequence spans 372 residues: MNLEEENTIFKPLYSLKHSPINAYFSKNSDDFVVRERPLYEFSGKGEHLILHINKKDLTTNEALKILSETSGVKIRDFGYAGFKDKQGSTFQYLSMPKKFESFLSNFSHPKLKILETFIHENKLRIGHLKGNTFFIRLKKVLPSDALKLEQALMNLDKQGFTNYFGYQRFGKFGDNYKEGLEILRGKKMKNVKMKEFLISAFQSELFNRYLSKRVELSHFANDFSEKELIQIYKISKEEAKELKKQEQFFKLLKGEVLGHYPFGKCFLCEDLSAELGRFKARDISAMGLLIGAKAYETGEGLALNLENEIFKDTLEFKAKMQGSRRFMWGYLEELKWRYDEEKAHFCIEFFLQKGSYATVVLEEILHKNLFE.

Asp85 serves as the catalytic Nucleophile. The TRUD domain maps to 160–330; that stretch reads GFTNYFGYQR…MQGSRRFMWG (171 aa).

It belongs to the pseudouridine synthase TruD family.

It catalyses the reaction uridine(13) in tRNA = pseudouridine(13) in tRNA. In terms of biological role, responsible for synthesis of pseudouridine from uracil-13 in transfer RNAs. This is tRNA pseudouridine synthase D from Campylobacter jejuni (strain RM1221).